The primary structure comprises 62 residues: Small ribosomal subunit protein eS27 (62 aa).

Zn(2+)-binding residues include Cys-17, Cys-20, Cys-36, and Cys-39. The segment at 17–39 (CPDCENEQVVFERASTVVECTVC) adopts a C4-type zinc-finger fold.

Belongs to the eukaryotic ribosomal protein eS27 family. In terms of assembly, part of the 30S ribosomal subunit. Zn(2+) serves as cofactor.

The protein is Small ribosomal subunit protein eS27 of Methanoculleus marisnigri (strain ATCC 35101 / DSM 1498 / JR1).